A 965-amino-acid polypeptide reads, in one-letter code: Receptor-like protein 15 (965 aa).

Positions 1-23 (MEGKVFLGHNLIWVMLLMGQLHG) are cleaved as a signal peptide. Over 24 to 916 (YKSCIDEEKI…GVEADESIID (893 aa)) the chain is Extracellular. 4 N-linked (GlcNAc...) asparagine glycosylation sites follow: Asn-57, Asn-95, Asn-109, and Asn-145. LRR repeat units lie at residues 80-102 (EISFGGLSLKDNSLLNLSLLHPF), 103-127 (EDVRSLNLSSSRCSGLFDDVEGYKS), 131-154 (LRKLEILDLASNKFNNSIFHFLSA), 156-179 (TSLTTLFLRSNNMDGSFPAKELRD), 180-204 (LTNLELLDLSRNRFNGSIPIQELSS), 206-230 (RKLKALDLSGNEFSGSMELQGKFCT), 243-267 (LNNMQELDLSQNKLVGHLPSCLTSL), 268-290 (TGLRVLDLSSNKLTGTVPSSLGS), 292-315 (QSLEYLSLFDNDFEGSFSFGSLAN), 316-341 (LSNLMVLKLCSKSSSLQVLSESSWKP), 342-365 (KFQLSVIALRSCNMEKVPHFLLHQ), 366-389 (KDLRHVDLSDNNISGKLPSWLLAN), 391-415 (TKLKVLLLQNNLFTSFQIPKSAHNL), 417-435 (FLDVSANDFNHLFPENIGW), 437-461 (FPHLRYLNTSKNNFQENLPSSLGNM), 462-485 (NGIQYMDLSRNSFHGNLPRSFVNG), and 487-512 (YSMAILKLSHNKLSGEIFPESTNFTN). A glycan (N-linked (GlcNAc...) asparagine) is linked at Asn-194. An N-linked (GlcNAc...) asparagine glycan is attached at Asn-315. N-linked (GlcNAc...) asparagine glycans are attached at residues Asn-377 and Asn-389. Asn-444 carries an N-linked (GlcNAc...) asparagine glycan. Residue Asn-509 is glycosylated (N-linked (GlcNAc...) asparagine). The LRR 18; degenerate repeat unit spans residues 514–533 (LGLFMDNNLFTGKIGQGLRS). LRR repeat units follow at residues 534–557 (LINLELLDMSNNNLTGVIPSWIGE), 558–582 (LPSLTALLISDNFLKGDIPMSLFNK), 584–606 (SLQLLDLSANSLSGVIPPQHDSR), 608–627 (GVVLLLQDNKLSGTIPDTLL), 628–652 (ANVEILDLRNNRFSGKIPEFINIQN), 654–674 (SILLLRGNNFTGQIPHQLCGL), 675–698 (SNIQLLDLSNNRLNGTIPSCLSNT), 778–801 (LKLLFGMDLSENELSGEIPVEFGG), 802–825 (LLELRALNLSHNNLSGVIPKSISS), 827–850 (EKMESFDLSFNRLQGRIPSQLTEL), and 851–875 (TSLSVFKVSHNNLSGVIPQGRQFNT). Residues Asn-546 and Asn-581 are each glycosylated (N-linked (GlcNAc...) asparagine). Residues Asn-652, Asn-662, Asn-688, and Asn-697 are each glycosylated (N-linked (GlcNAc...) asparagine). N-linked (GlcNAc...) asparagine glycosylation is found at Asn-809 and Asn-814. N-linked (GlcNAc...) asparagine glycans are attached at residues Asn-862, Asn-893, and Asn-898. Residues 917-937 (MVSFYLSFAAAYVTILIGILA) traverse the membrane as a helical segment. The Cytoplasmic segment spans residues 938-965 (SLSFDSPWSRFWFYKVDAFIKKVRNLLL).

Belongs to the RLP family.

The protein localises to the cell membrane. The chain is Receptor-like protein 15 from Arabidopsis thaliana (Mouse-ear cress).